A 343-amino-acid chain; its full sequence is 2-alkenal reductase (NADP(+)-dependent) (343 aa).

Residues Tyr-55 and Tyr-80 each coordinate substrate. NADP(+)-binding positions include 165–166 (AV), Gly-186, Lys-190, Tyr-206, Asn-230, Cys-252, Tyr-258, 282–284 (FLV), and Asn-332.

Belongs to the NADP-dependent oxidoreductase L4BD family. In terms of assembly, homodimer.

The catalysed reaction is an n-alkanal + NADP(+) = an alk-2-enal + NADPH + H(+). In terms of biological role, reduces the C=C double bonds of alpha, beta unsaturated enones, but has no activity on enones with an endocyclic C=C double-bond. Shows a high specificity for NADPH as the hybrid donor. Substrates are 1-nitrocyclohexene, 2-methylpentenal, trans-cinnamaldehyde, methyl-trans-2-methylcinnamaldehyde, trans-2-nonenal and 1-octen-3-one. Reduced activity with aplha-methyl transcinnamaldehyde, 1-cyclohexene-1-carboxaldehyde, methyl crotonate, (R)-pulegone, and dimethyl itaconate and no activity with maleimides, citral, (5R)- or (5S)-carvone, (S)-perillyl alcohol, and substituted cyclohexenones and cyclopentenones. May also act as a allyl-alcohol dehydrogenase by catalyzing the dehydrogenation of secondary allylic alcohols rather than saturated secondary alcohols. Allyl-alcohol dehydrogenase is specific for the S-stereoisomer of the alcohols. This Nicotiana tabacum (Common tobacco) protein is 2-alkenal reductase (NADP(+)-dependent) (DBR).